The chain runs to 261 residues: RING finger protein 208 (261 aa).

The interval 83–106 is disordered; the sequence is PALEGAPHTPPLPRRPRKGSSELG. Ser-102 bears the Phosphoserine mark. The RING-type zinc-finger motif lies at 143–190; sequence CPTCGHSYNVTQRRPRVLSCLHSVCEQCLQILYESCPKYKFISCPTCR.

In Homo sapiens (Human), this protein is RING finger protein 208 (RNF208).